Consider the following 556-residue polypeptide: Capsid vertex component 2 (556 aa).

The interval M1–V54 is interaction with major capsid protein/MCP. The tract at residues Q104–N136 is disordered. Residues V121–P132 are compositionally biased toward pro residues.

Belongs to the herpesviridae CVC2 protein family. As to quaternary structure, heterodimerizes with CVC1. Interacts with major capsid protein/MCP and triplex capsid protein 1/TRX1 at the pentamer vertices. Interacts with the large tegument protein/LTP.

It localises to the virion. The protein localises to the host nucleus. Functionally, capsid vertex-specific component that plays a role during viral DNA encapsidation, assuring correct genome cleavage and presumably stabilizing capsids that contain full-length viral genomes. Participates in the interaction between the capsid and the tegument through interaction with the large tegument protein/LTP. The sequence is that of Capsid vertex component 2 from Connochaetes taurinus (Blue wildebeest).